We begin with the raw amino-acid sequence, 380 residues long: RNA-binding motif protein, Y chromosome, family 9 (380 aa).

Residues Gly8–Arg86 form the RRM domain. Disordered stretches follow at residues Lys82 to Arg226 and His279 to Ser358. Residues Arg166–Gly178 are compositionally biased toward polar residues. Composition is skewed to basic and acidic residues over residues Arg180–Ser190 and Ile333–Lys351.

Testis-specific.

Its subcellular location is the nucleus. Functionally, RNA-binding protein which may be involved in spermatogenesis. May be required for sperm development, possibly by participating in pre-mRNA splicing in the testis. The chain is RNA-binding motif protein, Y chromosome, family 9 from Mus musculus (Mouse).